A 237-amino-acid chain; its full sequence is BTB/POZ domain-containing protein KCTD6 (237 aa).

The BTB domain occupies 12–81 (HPVTLNVGGH…LRTSELTLPV (70 aa)).

Homopentamer. May be part of a cullin-containing E3 ubiquitin-protein ligase complex.

The protein operates within protein modification; protein ubiquitination. Its function is as follows. Probable substrate-specific adapter of a cullin-containing E3 ubiquitin-protein ligase complex mediating the ubiquitination and subsequent proteasomal degradation of target proteins. In Danio rerio (Zebrafish), this protein is BTB/POZ domain-containing protein KCTD6 (kctd6).